A 197-amino-acid chain; its full sequence is Holliday junction branch migration complex subunit RuvA (197 aa).

A domain I region spans residues 1-64 (MIGRLRGIVA…EDSVSLYGFL (64 aa)). The domain II stretch occupies residues 65–143 (REGERRLFRD…QFGAGGALPT (79 aa)). Positions 144–153 (GSGPAPADPL) are flexible linker. The domain III stretch occupies residues 153–197 (LSDATVALQQLGYKPAEAARMAREAFNEGDEVAIVIRKALQSALR).

Belongs to the RuvA family. Homotetramer. Forms an RuvA(8)-RuvB(12)-Holliday junction (HJ) complex. HJ DNA is sandwiched between 2 RuvA tetramers; dsDNA enters through RuvA and exits via RuvB. An RuvB hexamer assembles on each DNA strand where it exits the tetramer. Each RuvB hexamer is contacted by two RuvA subunits (via domain III) on 2 adjacent RuvB subunits; this complex drives branch migration. In the full resolvosome a probable DNA-RuvA(4)-RuvB(12)-RuvC(2) complex forms which resolves the HJ.

The protein localises to the cytoplasm. The RuvA-RuvB-RuvC complex processes Holliday junction (HJ) DNA during genetic recombination and DNA repair, while the RuvA-RuvB complex plays an important role in the rescue of blocked DNA replication forks via replication fork reversal (RFR). RuvA specifically binds to HJ cruciform DNA, conferring on it an open structure. The RuvB hexamer acts as an ATP-dependent pump, pulling dsDNA into and through the RuvAB complex. HJ branch migration allows RuvC to scan DNA until it finds its consensus sequence, where it cleaves and resolves the cruciform DNA. The chain is Holliday junction branch migration complex subunit RuvA from Stenotrophomonas maltophilia (strain R551-3).